A 537-amino-acid polypeptide reads, in one-letter code: Phosphoenolpyruvate carboxykinase (ATP) (537 aa).

Arginine 61, tyrosine 195, and lysine 201 together coordinate substrate. ATP contacts are provided by residues lysine 201, histidine 220, and 236 to 244; that span reads GLSGTGKTT. Mn(2+)-binding residues include lysine 201 and histidine 220. Mn(2+) is bound at residue aspartate 257. ATP contacts are provided by glutamate 285, arginine 323, and threonine 448. Position 323 (arginine 323) interacts with substrate.

It belongs to the phosphoenolpyruvate carboxykinase (ATP) family. It depends on Mn(2+) as a cofactor.

It localises to the cytoplasm. The catalysed reaction is oxaloacetate + ATP = phosphoenolpyruvate + ADP + CO2. It functions in the pathway carbohydrate biosynthesis; gluconeogenesis. Its function is as follows. Involved in the gluconeogenesis. Catalyzes the conversion of oxaloacetate (OAA) to phosphoenolpyruvate (PEP) through direct phosphoryl transfer between the nucleoside triphosphate and OAA. In Parvibaculum lavamentivorans (strain DS-1 / DSM 13023 / NCIMB 13966), this protein is Phosphoenolpyruvate carboxykinase (ATP).